The sequence spans 193 residues: Segregation and condensation protein B (193 aa).

Belongs to the ScpB family. Homodimer. Homodimerization may be required to stabilize the binding of ScpA to the Smc head domains. Component of a cohesin-like complex composed of ScpA, ScpB and the Smc homodimer, in which ScpA and ScpB bind to the head domain of Smc. The presence of the three proteins is required for the association of the complex with DNA.

The protein localises to the cytoplasm. Functionally, participates in chromosomal partition during cell division. May act via the formation of a condensin-like complex containing Smc and ScpA that pull DNA away from mid-cell into both cell halves. This is Segregation and condensation protein B from Streptococcus thermophilus (strain CNRZ 1066).